The following is a 663-amino-acid chain: Polyunsaturated fatty acid lipoxygenase ALOX12 (663 aa).

The region spanning glycine 2 to arginine 114 is the PLAT domain. A Lipoxygenase domain is found at leucine 115–isoleucine 663. Residue serine 246 is modified to Phosphoserine. Fe cation-binding residues include histidine 360, histidine 365, histidine 540, asparagine 544, and isoleucine 663.

It belongs to the lipoxygenase family. It depends on Fe cation as a cofactor. Expressed in vascular smooth muscle cells.

The protein localises to the cytoplasm. It localises to the cytosol. Its subcellular location is the membrane. The catalysed reaction is (5Z,8Z,11Z,14Z)-eicosatetraenoate + O2 = (12S)-hydroperoxy-(5Z,8Z,10E,14Z)-eicosatetraenoate. It carries out the reaction (5Z,8Z,11Z,14Z)-eicosatetraenoate + O2 = (15S)-hydroperoxy-(5Z,8Z,11Z,13E)-eicosatetraenoate. The enzyme catalyses 2 leukotriene A4 + O2 + 2 H2O = 2 lipoxin A4. It catalyses the reaction 2 leukotriene A4 + O2 + 2 H2O = 2 lipoxin B4. The catalysed reaction is (14S)-hydroperoxy-(4Z,7Z,10Z,12E,16Z,19Z)-docosahexaenoate = (13S,14S)-epoxy-(4Z,7Z,9E,11E,16Z,19Z)-docosahexaenoate + H2O. It carries out the reaction N-(5Z,8Z,11Z,14Z)-eicosatetraenoyl-L-alanine + O2 = N-(15S)-hydroperoxy-(5Z,8Z,11Z,13E)-eicosatetraenoyl-alanine. The enzyme catalyses N-(5Z,8Z,11Z,14Z)-eicosatetraenoyl-L-alanine + O2 = N-(12S)-hydroperoxy-(5Z,8Z,10E,14Z)-eicosatetraenoyl-alanine. It catalyses the reaction N-(5Z,8Z,11Z,14Z)-eicosatetraenoyl-gamma-aminobutanoate + O2 = N-(15S)-hydroperoxy-(5Z,8Z,11Z,13E)-eicosatetraenoyl-gamma-aminobutanoate. The catalysed reaction is N-(5Z,8Z,11Z,14Z)-eicosatetraenoyl-gamma-aminobutanoate + O2 = N-(12S)-hydroperoxy-(5Z,8Z,10E,14Z)-eicosatetraenoyl-gamma-aminobutanoate. It carries out the reaction N-(5Z,8Z,11Z,14Z)-eicosatetraenoyl-glycine + O2 = N-(15S)-hydroperoxy-(5Z,8Z,11Z,13E)-eicosatetraenoyl-glycine. The enzyme catalyses N-(5Z,8Z,11Z,14Z)-eicosatetraenoyl-glycine + O2 = N-(12S)-hydroperoxy-(5Z,8Z,10E,14Z)-eicosatetraenoyl-glycine. It catalyses the reaction N-(5Z,8Z,11Z,14Z)-eicosatetraenoyl-taurine + O2 = N-(12S)-hydroperoxy-(5Z,8Z,10E,14Z)-eicosatetraenoyl-taurine. The catalysed reaction is N-(5Z,8Z,11Z,14Z)-eicosatetraenoyl-taurine + O2 = N-(15S)-hydroperoxy-(5Z,8Z,11Z,13E)-eicosatetraenoyl-taurine. It carries out the reaction (4Z,7Z,10Z,13Z,16Z,19Z)-docosahexaenoate + O2 = (14S)-hydroperoxy-(4Z,7Z,10Z,12E,16Z,19Z)-docosahexaenoate. The enzyme catalyses (7S)-hydroperoxy-(4Z,8E,10Z,13Z,16Z,19Z)-docosahexaenoate + O2 = (7S,14S)-dihydroperoxy-(4Z,8E,10Z,12E,16Z,19Z)-docosahexaenoate. It catalyses the reaction (7S)-hydroperoxy-(4Z,8E,10Z,13Z,16Z,19Z)-docosahexaenoate + O2 = (7S,17S)-dihydroperoxy-(4Z,8E,10Z,13Z,15E,19Z)-docosahexaenoate. The catalysed reaction is (5Z,8Z,11Z,14Z,17Z)-eicosapentaenoate + O2 = (12S)-hydroperoxy-(5Z,8Z,10E,14Z,17Z)-eicosapentaenoate. It carries out the reaction (8Z,11Z,14Z)-eicosatrienoate + O2 = (12S)-hydroperoxy-(8Z,10E,14Z)-eicosatrienoate. The enzyme catalyses (9Z,12Z)-octadecadienoate + O2 = (13S)-hydroperoxy-(9Z,11E)-octadecadienoate. It catalyses the reaction (5Z,8Z,11Z)-eicosatrienoate + O2 = (12S)-hydroperoxy-(5Z,8Z,10E)-eicosatrienoate. The catalysed reaction is (14R,15S)-epoxy-(5Z,8Z,11Z)-eicosatrienoate + O2 = (12S)-hydroperoxy-(14R,15S)-epoxy-(5Z,8Z,10E)-eicosatrienoate. It carries out the reaction (14S,15R)-epoxy-(5Z,8Z,11Z)-eicosatrienoate + O2 = (12S)-hydroperoxy-(14S,15R)-epoxy-(5Z,8Z,10E)-eicosatrienoate. It participates in lipid metabolism; hydroperoxy eicosatetraenoic acid biosynthesis. With respect to regulation, activated by EGF. Arachidonic acid conversion is inhibited by (13S,14S)-epoxy-(4Z,7Z,9E,11E,16Z,19Z)-docosahexaenoate (13S,14S-epoxy-DHA). Arachidonate 12-lipoxygenase activity is decreased when PH decreases from 7.4 to 6. Functionally, catalyzes the regio and stereo-specific incorporation of molecular oxygen into free and esterified polyunsaturated fatty acids generating lipid hydroperoxides that can be further reduced to the corresponding hydroxy species. Mainly converts arachidonate ((5Z,8Z,11Z,14Z)-eicosatetraenoate) to the specific bioactive lipid (12S)-hydroperoxyeicosatetraenoate/(12S)-HPETE. Through the production of bioactive lipids like (12S)-HPETE it regulates different biological processes including platelet activation. It can also catalyze the epoxidation of double bonds of polyunsaturated fatty acids such as (14S)-hydroperoxy-docosahexaenoate/(14S)-HPDHA resulting in the formation of (13S,14S)-epoxy-DHA. Furthermore, it may participate in the sequential oxidations of DHA ((4Z,7Z,10Z,13Z,16Z,19Z)-docosahexaenoate) to generate specialized pro-resolving mediators (SPMs) like resolvin D5 ((7S,17S)-diHPDHA) and (7S,14S)-diHPDHA, that actively down-regulate the immune response and have anti-aggregation properties with platelets. An additional function involves a multistep process by which it transforms leukotriene A4/LTA4 into the bioactive lipids lipoxin A4/LXA4 and lipoxin B4/LXB4, both are vasoactive and LXA4 may regulate neutrophil function via occupancy of specific recognition sites. Can also peroxidize linoleate ((9Z,12Z)-octadecadienoate) to (13S)-hydroperoxyoctadecadienoate/ (13S-HPODE). Due to its role in regulating both the expression of the vascular endothelial growth factor (VEGF, an angiogenic factor involved in the survival and metastasis of solid tumors) and the expression of integrin beta-1 (known to affect tumor cell migration and proliferation), it can be regarded as protumorigenic. Important for cell survival, as it may play a role not only in proliferation but also in the prevention of apoptosis in vascular smooth muscle cells. The sequence is that of Polyunsaturated fatty acid lipoxygenase ALOX12 from Homo sapiens (Human).